Consider the following 433-residue polypeptide: Glucoside xylosyltransferase 1 (433 aa).

The Cytoplasmic segment spans residues 1–6 (MRRFAR). A helical; Signal-anchor for type II membrane protein transmembrane segment spans residues 7–29 (VALLFLGCGVCSLLYGVSQLALS). At 30 to 433 (LEQEAGGARQ…DLSVRRSKGS (404 aa)) the chain is on the lumenal side. A disordered region spans residues 39-64 (QRQARESAAPGGGRQAGSADGGEEGA). Residues asparagine 69, asparagine 166, asparagine 271, asparagine 305, and asparagine 380 are each glycosylated (N-linked (GlcNAc...) asparagine).

This sequence belongs to the glycosyltransferase 8 family.

It is found in the membrane. The catalysed reaction is 3-O-(beta-D-glucosyl)-L-seryl-[EGF-like domain protein] + UDP-alpha-D-xylose = 3-O-[alpha-D-xylosyl-(1-&gt;3)-beta-D-glucosyl]-L-seryl-[EGF-like domain protein] + UDP + H(+). Its function is as follows. Glycosyltransferase which elongates the O-linked glucose attached to EGF-like repeats in the extracellular domain of Notch proteins by catalyzing the addition of xylose. The chain is Glucoside xylosyltransferase 1 (GXYLT1) from Gallus gallus (Chicken).